A 498-amino-acid chain; its full sequence is MRINPTTSDPEVSIREKKNLGRIAQIIGPVLDVAFPPGKMPNIYNALVVKGRDTLGQEINVTCEVQQLLGNNRVRAVAMSATEGLKRGMDVVDMGSPLSVPVGGATLGRIFNVLGEPVDNLGPVDTRTTSPIHKSAPAFIELDTKLSIFETGIKVVDLLAPYRRGGKIGLFGGAGVGKTVLIMELINNIAKAHGGVSVFGGVGERTREGNDLYMEMKESGVINEQNLAESKVALVYGQMNEPPGARMRVGLTALTMAEYFRDVNEQDVLLFIDNIFRFVQAGSEVSALLGRMPSAVGYQPTLSTEMGSLQERITSTKKGSITSIQAVYVPADDLTDPAPATTFAHLDATTVLSRGLAAKGIYPAVDPLDSTSTMLQPRIVGEEHYETAQQVKQTLQRYKELQDIIAILGLDELSEEDRLTVARARKIERFLSQPFFVAEVFTGSPGKYVGLAETIRGFKLILSGEFDSLPEQAFYLVGNIDEATAKATNLEMESKLKK.

At T6 the chain carries Phosphothreonine. S13 is subject to Phosphoserine. 172–179 (GGAGVGKT) provides a ligand contact to ATP.

It belongs to the ATPase alpha/beta chains family. F-type ATPases have 2 components, CF(1) - the catalytic core - and CF(0) - the membrane proton channel. CF(1) has five subunits: alpha(3), beta(3), gamma(1), delta(1), epsilon(1). CF(0) has four main subunits: a(1), b(1), b'(1) and c(9-12).

It localises to the plastid. It is found in the chloroplast thylakoid membrane. The catalysed reaction is ATP + H2O + 4 H(+)(in) = ADP + phosphate + 5 H(+)(out). Its function is as follows. Produces ATP from ADP in the presence of a proton gradient across the membrane. The catalytic sites are hosted primarily by the beta subunits. This chain is ATP synthase subunit beta, chloroplastic, found in Draba nemorosa (Woodland whitlowgrass).